Here is a 156-residue protein sequence, read N- to C-terminus: Small ribosomal subunit protein uS7 (156 aa).

The protein belongs to the universal ribosomal protein uS7 family. Part of the 30S ribosomal subunit. Contacts proteins S9 and S11.

Its function is as follows. One of the primary rRNA binding proteins, it binds directly to 16S rRNA where it nucleates assembly of the head domain of the 30S subunit. Is located at the subunit interface close to the decoding center, probably blocks exit of the E-site tRNA. This Vibrio parahaemolyticus serotype O3:K6 (strain RIMD 2210633) protein is Small ribosomal subunit protein uS7.